The following is a 90-amino-acid chain: Large ribosomal subunit protein bL31B (90 aa).

Belongs to the bacterial ribosomal protein bL31 family. Type B subfamily. In terms of assembly, part of the 50S ribosomal subunit.

In Pseudomonas fluorescens (strain SBW25), this protein is Large ribosomal subunit protein bL31B.